A 345-amino-acid chain; its full sequence is Uroporphyrinogen decarboxylase (345 aa).

Substrate is bound by residues 27–31, F46, D76, Y152, S207, and H320; that span reads RQAGR.

This sequence belongs to the uroporphyrinogen decarboxylase family. In terms of assembly, homodimer.

Its subcellular location is the cytoplasm. It carries out the reaction uroporphyrinogen III + 4 H(+) = coproporphyrinogen III + 4 CO2. It participates in porphyrin-containing compound metabolism; protoporphyrin-IX biosynthesis; coproporphyrinogen-III from 5-aminolevulinate: step 4/4. Its function is as follows. Catalyzes the decarboxylation of four acetate groups of uroporphyrinogen-III to yield coproporphyrinogen-III. The chain is Uroporphyrinogen decarboxylase from Geobacillus sp. (strain WCH70).